A 274-amino-acid polypeptide reads, in one-letter code: Acetylaranotin bis-thiomethyltransferase (274 aa).

Belongs to the class I-like SAM-binding methyltransferase superfamily.

Its pathway is mycotoxin biosynthesis. Acetylaranotin bis-thiomethyltransferase involved in the biosynthesis of acetylaranotin derivatives, members of the epipolythiodioxopiperazine (ETP) class of toxins characterized by a disulfide-bridged cyclic dipeptide. The first step of acetylaranotin biosynthesis is performed by the NRPS ataP which produces diketopiperazine cyclo-L-Phe-L-Phe via the condensation of 2 phenylalanines (L-Phe). The ataC domain of ataTC then catalyzes the formation of bishydroxylation of cyclo-L-Phe-L-Phe. The glutathione S-transferase domain ataG in ataIMG further catalyzes the conjugation of two glutathiones to the bishydroxylated intermediate. Next, the dipeptidase ataJ removes the Glu residues. The following step is performed by the carbon sulfur lyase domain ataI of ataIMG which may convert the bis-cysteinyl adduct to yield an epidithiol intermediate. The ataT domain from ataTC then catalyzes the oxidation of the free dithiols, followed by a cyclization step catalyzed by the cytochrome P450 ataF. AtaF probably acts as an epoxidase to promote a dual epoxidation formation at C8 and C9 along with C8' and C9', followed by the spontaneous nucleophilic attack of the amide nitrogens N10 and N10' to yield an intermediate with the pyrrolidine partial structure. The final steps of acetylaranotin biosynthesis involve the acetylation and ring rearrangement of an epitetrathiodiketopiperazine intermediate to produce acetylaranotin. AtaH probably catalyzes the acetylation of epitetrathiodiketopiperazine to produce a diacetate and ataY is responsible for the formation of the dihydrooxepin moiety that converts the diacetate intermediate to acetylaranotin via acetylapoaranotin. Both enzymes could function independently in the absence of the other. The acetylaranotin bis-thiomethyltransferase ataS located outside of acetylaranotin gene cluster is the main thiomethyltransferase responsible for converting acetylaranotin and its related intermediates to their methylated forms. The sequence is that of Acetylaranotin bis-thiomethyltransferase from Aspergillus terreus (strain NIH 2624 / FGSC A1156).